The chain runs to 466 residues: Myocardial zonula adherens protein (466 aa).

Over residues 1 to 10 (MLRSTSTVTL) the composition is skewed to polar residues. Positions 1 to 16 (MLRSTSTVTLFSGGGA) are cleaved as a signal peptide. A disordered region spans residues 1–68 (MLRSTSTVTL…SNGESTKRLP (68 aa)). Basic and acidic residues predominate over residues 45–55 (TEKKIERKDQP). 2 coiled-coil regions span residues 95-137 (NQLK…QDLS) and 187-415 (HIKD…LTET).

This sequence belongs to the MYZAP family. In terms of assembly, interacts with DSP, MPRIP and TJP1/ZO1. Interaction with MPRIP inhibits the activation of transcription factor SRF. Interacts with GRIN1. Interacts with DYNLL1. As to expression, detected in heart myocardium and lung.

It is found in the cytoplasm. The protein localises to the cytoskeleton. The protein resides in the cell membrane. Its subcellular location is the myofibril. It localises to the sarcomere. It is found in the i band. The protein localises to the z line. The protein resides in the cell junction. Functionally, plays a role in cellular signaling via Rho-related GTP-binding proteins and activation of transcription factor SRF. Targets TJP1 to cell junctions. In cortical neurons, may play a role in glutaminergic signal transduction through interaction with the NMDA receptor subunit GRIN1. This is Myocardial zonula adherens protein (Myzap) from Mus musculus (Mouse).